Consider the following 298-residue polypeptide: Putative enoyl-CoA reductase (298 aa).

A run of 4 helical transmembrane segments spans residues 162–182, 189–209, 229–249, and 254–274; these read CVYY…PYYT, LVNA…AVHV, ILFS…WVAF, and SMLT…EWAV.

The protein belongs to the steroid 5-alpha reductase family.

It localises to the membrane. It functions in the pathway lipid metabolism; fatty acid biosynthesis. In terms of biological role, involved in the synthesis of fatty acids. This Trypanosoma brucei brucei (strain 927/4 GUTat10.1) protein is Putative enoyl-CoA reductase.